The following is a 1043-amino-acid chain: Isoleucine--tRNA ligase (1043 aa).

The 'HIGH' region signature appears at 49-59; that stretch reads PFATGLPHYGH. The 'KMSKS' region signature appears at 592–596; sequence KMSKR. An ATP-binding site is contributed by lysine 595.

The protein belongs to the class-I aminoacyl-tRNA synthetase family. IleS type 2 subfamily. In terms of assembly, monomer. Zn(2+) is required as a cofactor.

It is found in the cytoplasm. The catalysed reaction is tRNA(Ile) + L-isoleucine + ATP = L-isoleucyl-tRNA(Ile) + AMP + diphosphate. Catalyzes the attachment of isoleucine to tRNA(Ile). As IleRS can inadvertently accommodate and process structurally similar amino acids such as valine, to avoid such errors it has two additional distinct tRNA(Ile)-dependent editing activities. One activity is designated as 'pretransfer' editing and involves the hydrolysis of activated Val-AMP. The other activity is designated 'posttransfer' editing and involves deacylation of mischarged Val-tRNA(Ile). The protein is Isoleucine--tRNA ligase of Chlamydia abortus (strain DSM 27085 / S26/3) (Chlamydophila abortus).